Reading from the N-terminus, the 761-residue chain is MALARCVLAVILGVLSEVARADPVLHSPLHRPHPSPPRSQHAHYLPSSRRPPRTPRFPLPPRAPAAQRPQLLSTRHTPPTISRRCGAGEPWGNATNLGVPCLHWDEVPPFLERSPPASWAELRGQPHNFCRSPGGAGRPWCFYRNAQGKVDWGYCDCGQGPALPVIRLVGGKSGHEGRVELYHAGQWGTICDDQWDDADAEVICRQLGLSGIAKAWHQAHFGEGSGPILLDEVRCTGNELSIEQCPKSSWGEHNCGHKEDAGVSCAPLTDGVIRLSGGKSVHEGRLEVYYRGQWGTVCDDGWTEMNTYVACRLLGFKYGKQSSVNHFEGSSRPIWLDDVSCSGKEASFIQCSRRQWGRHDCSHREDVGLTCYPDSDGHRLSPGFPIRLMDGENKREGRVEVFVSGQWGTICDDGWTDKHAAVICRQLGYKGPARARTMAYFGEGKGPIHMDNVKCTGNEKALADCVKQDIGRHNCRHSEDAGVICDYYEKKTSGHGNKETLSSGCGLRLLHRRQKRIIGGNNSLRGAWPWQASLRLKSTHGDGRLLCGATLLSSCWVLTAAHCFKRYGNNSRSYAVRVGDYHTLVPEEFEQEIGVQQIVIHRNYRPDSSDYDIALVRLQGSGEQCARLSTHVLPACLPLWRERPQKTASNCHITGWGDTGRAYSRTLQQAAVPLLPKRFCKERYKGLFTGRMLCAGNLQEDNRVDSCQGDSGGPLMCEKPDETWVVYGVTSWGYGCGIKDTPGVYTRVPAFVPWIKSVTSL.

A signal peptide spans 1 to 21 (MALARCVLAVILGVLSEVARA). The interval 26-88 (HSPLHRPHPS…PTISRRCGAG (63 aa)) is disordered. A compositionally biased stretch (pro residues) spans 54–63 (TPRFPLPPRA). A Kringle domain is found at 85–157 (CGAGEPWGNA…GKVDWGYCDC (73 aa)). Disulfide bonds link Cys85/Cys157, Cys101/Cys141, Cys130/Cys155, Cys191/Cys255, Cys204/Cys265, Cys235/Cys245, Cys298/Cys361, Cys311/Cys371, Cys341/Cys351, Cys411/Cys475, Cys424/Cys485, Cys455/Cys465, Cys505/Cys636, Cys547/Cys563, Cys651/Cys717, Cys680/Cys694, and Cys707/Cys736. N-linked (GlcNAc...) asparagine glycosylation is present at Asn93. 3 SRCR domains span residues 166–267 (IRLV…SCAP), 273–373 (IRLS…TCYP), and 386–487 (IRLM…ICDY). The zymogen activation region stretch occupies residues 505-516 (CGLRLLHRRQKR). A Peptidase S1 domain is found at 517–760 (IIGGNNSLRG…FVPWIKSVTS (244 aa)). Asn521 carries N-linked (GlcNAc...) asparagine glycosylation. The active-site Charge relay system is His562. A glycan (N-linked (GlcNAc...) asparagine) is linked at Asn569. The Charge relay system role is filled by Asp612. Ser711 serves as the catalytic Charge relay system.

It belongs to the peptidase S1 family.

The protein resides in the secreted. Functionally, plays a role in neuronal plasticity and the proteolytic action may subserve structural reorganizations associated with learning and memory operations. This is Neurotrypsin (Prss12) from Rattus norvegicus (Rat).